The sequence spans 171 residues: Small ribosomal subunit protein uS5 (171 aa).

One can recognise an S5 DRBM domain in the interval 12 to 75 (LKEKLISVNR…EKARRNMIQV (64 aa)).

This sequence belongs to the universal ribosomal protein uS5 family. As to quaternary structure, part of the 30S ribosomal subunit. Contacts proteins S4 and S8.

In terms of biological role, with S4 and S12 plays an important role in translational accuracy. Its function is as follows. Located at the back of the 30S subunit body where it stabilizes the conformation of the head with respect to the body. This is Small ribosomal subunit protein uS5 from Buchnera aphidicola subsp. Baizongia pistaciae (strain Bp).